The primary structure comprises 372 residues: Putative 26S proteasome regulatory subunit homolog MTBMA_c13930 (372 aa).

164 to 171 (GSPGTGKT) provides a ligand contact to ATP.

This sequence belongs to the AAA ATPase family.

The 26S proteasome is involved in the ATP-dependent degradation of ubiquitinated proteins. The regulatory (or ATPase) complex confers ATP dependency and substrate specificity to the 26S complex. This is Putative 26S proteasome regulatory subunit homolog MTBMA_c13930 from Methanothermobacter marburgensis (strain ATCC BAA-927 / DSM 2133 / JCM 14651 / NBRC 100331 / OCM 82 / Marburg) (Methanobacterium thermoautotrophicum).